The sequence spans 290 residues: MVGMDLFKCVMMIMVLVVSCGEAVSGAKFDELYRSSWAMDHCVNEGEVTKLKLDNYSGAGFESRSKYLFGKVSIQIKLVEGDSAGTVTAFYMSSDGPNHNEFDFEFLGNTTGEPYIVQTNIYVNGVGNREQRLNLWFDPTTEFHTYSILWSKRSVVFMVDETPIRVQKNLEEKGIPFAKDQAMGVYSSIWNADDWATQGGLVKTDWSHAPFVASYKEFQIDACEIPTTTDLSKCNGDQKFWWDEPTVSELSLHQNHQLIWVRANHMIYDYCFDATRFPVTPLECQHHRHL.

The signal sequence occupies residues 1-26 (MVGMDLFKCVMMIMVLVVSCGEAVSG). The GH16 domain occupies 27–215 (AKFDELYRSS…WSHAPFVASY (189 aa)). The N-linked (GlcNAc...) asparagine glycan is linked to Asn55. Glu101 (nucleophile) is an active-site residue. Glu105 serves as the catalytic Proton donor. Glu105 contacts xyloglucan. N-linked (GlcNAc...) asparagine glycosylation occurs at Asn109. Xyloglucan contacts are provided by residues 118 to 120 (QTN), 128 to 130 (NRE), 194 to 195 (DW), and Gly199. 2 disulfides stabilise this stretch: Cys223/Cys234 and Cys271/Cys284. Residue Arg276 participates in xyloglucan binding.

It belongs to the glycosyl hydrolase 16 family. XTH group 1 subfamily. In terms of processing, contains at least one intrachain disulfide bond essential for its enzymatic activity. Highly expressed in shoot apices. In the vegetative and reproductive phases, it accumulates in the shoot apex region, where cell division is most active. In the reproductive phase, it is also expressed in flower buds, flower stalks and internodes bearing flowers.

The protein localises to the secreted. It is found in the cell wall. Its subcellular location is the extracellular space. The protein resides in the apoplast. The enzyme catalyses breaks a beta-(1-&gt;4) bond in the backbone of a xyloglucan and transfers the xyloglucanyl segment on to O-4 of the non-reducing terminal glucose residue of an acceptor, which can be a xyloglucan or an oligosaccharide of xyloglucan.. In terms of biological role, catalyzes xyloglucan endohydrolysis (XEH) and/or endotransglycosylation (XET). Cleaves and religates xyloglucan polymers, an essential constituent of the primary cell wall, and thereby participates in cell wall construction of growing tissues. Involved in internodal cell elongation. The sequence is that of Xyloglucan endotransglucosylase/hydrolase protein 9 (XTH9) from Arabidopsis thaliana (Mouse-ear cress).